Consider the following 33-residue polypeptide: Neutrophil defensin 1 (33 aa).

3 cysteine pairs are disulfide-bonded: C3–C31, C5–C20, and C10–C30.

Belongs to the alpha-defensin family.

It is found in the secreted. Anti-fungal and bactericidal activity, greater against Gram-positive bacteria. The protein is Neutrophil defensin 1 of Mesocricetus auratus (Golden hamster).